The sequence spans 217 residues: MAHSIWHEKIKSFLPEHYYGRINHFLDEAYASGLVYPPRENVFKALQVTPLEETKVLILGQDPYHGPKQAQGLSFSVPEEISAPPSLINILKELADDIGPRDHHDLSTWASQGVLLLNACLTVPAGQANGHAGLIWEPFTDAVIKVLNEKDSPVVFILWGAYARKKKAFITNPKHHIIESSHPSPLSSYRGFFGSKPFSRTNAILEKEGMTGVDWLK.

D62 serves as the catalytic Proton acceptor.

It belongs to the uracil-DNA glycosylase (UDG) superfamily. UNG family.

The protein resides in the cytoplasm. It catalyses the reaction Hydrolyzes single-stranded DNA or mismatched double-stranded DNA and polynucleotides, releasing free uracil.. Excises uracil residues from the DNA which can arise as a result of misincorporation of dUMP residues by DNA polymerase or due to deamination of cytosine. In Streptococcus pyogenes serotype M49 (strain NZ131), this protein is Uracil-DNA glycosylase.